We begin with the raw amino-acid sequence, 480 residues long: Ribosomal RNA small subunit methyltransferase F (480 aa).

Residues 125-131 (AAAPGSK), glutamate 149, aspartate 176, and aspartate 194 each bind S-adenosyl-L-methionine. Cysteine 247 (nucleophile) is an active-site residue.

It belongs to the class I-like SAM-binding methyltransferase superfamily. RsmB/NOP family.

The protein localises to the cytoplasm. The catalysed reaction is cytidine(1407) in 16S rRNA + S-adenosyl-L-methionine = 5-methylcytidine(1407) in 16S rRNA + S-adenosyl-L-homocysteine + H(+). Specifically methylates the cytosine at position 1407 (m5C1407) of 16S rRNA. The protein is Ribosomal RNA small subunit methyltransferase F of Enterobacter sp. (strain 638).